The chain runs to 540 residues: Ecdysone 20-monooxygenase (540 aa).

Heme is bound at residue Cys488.

Belongs to the cytochrome P450 family. It depends on heme as a cofactor. Strong expression by embryonic stage 10 in epidermis, decreases significantly in older embryos. Third instar larvae show expression in the midgut copper cells, Malpighian tubules and fat body. In the adult ovaries, expression is seen in both nurse cells and centripetally migrating follicle cells.

The protein resides in the mitochondrion membrane. It catalyses the reaction ecdysone + AH2 + O2 = 20-hydroxyecdysone + A + H2O. It functions in the pathway steroid biosynthesis; ecdysteroid biosynthesis. Its function is as follows. Required for CNS development; midline glial cells. Involved in the metabolism of insect hormones; responsible for all ecdysone 20-monooxygenase activity during embryonic, larval and adult stages. May be involved in the breakdown of synthetic insecticides. The polypeptide is Ecdysone 20-monooxygenase (shd) (Drosophila melanogaster (Fruit fly)).